The primary structure comprises 336 residues: Holliday junction branch migration complex subunit RuvB (336 aa).

A large ATPase domain (RuvB-L) region spans residues 4–184; it reads ADRLISAGTT…FGIVQRLEFY (181 aa). Residues Ile-23, Arg-24, Gly-65, Lys-68, Thr-69, Thr-70, 131–133, Arg-174, Tyr-184, and Arg-221 each bind ATP; that span reads EDY. Thr-69 provides a ligand contact to Mg(2+). A small ATPAse domain (RuvB-S) region spans residues 185 to 255; it reads QVPDLQYIVS…IAAQALDMLN (71 aa). Positions 258–336 are head domain (RuvB-H); that stretch reads AEGFDYMDRK…HFGITPPEMP (79 aa). 3 residues coordinate DNA: Arg-294, Arg-313, and Arg-318.

It belongs to the RuvB family. In terms of assembly, homohexamer. Forms an RuvA(8)-RuvB(12)-Holliday junction (HJ) complex. HJ DNA is sandwiched between 2 RuvA tetramers; dsDNA enters through RuvA and exits via RuvB. An RuvB hexamer assembles on each DNA strand where it exits the tetramer. Each RuvB hexamer is contacted by two RuvA subunits (via domain III) on 2 adjacent RuvB subunits; this complex drives branch migration. In the full resolvosome a probable DNA-RuvA(4)-RuvB(12)-RuvC(2) complex forms which resolves the HJ.

Its subcellular location is the cytoplasm. The catalysed reaction is ATP + H2O = ADP + phosphate + H(+). Its function is as follows. The RuvA-RuvB-RuvC complex processes Holliday junction (HJ) DNA during genetic recombination and DNA repair, while the RuvA-RuvB complex plays an important role in the rescue of blocked DNA replication forks via replication fork reversal (RFR). RuvA specifically binds to HJ cruciform DNA, conferring on it an open structure. The RuvB hexamer acts as an ATP-dependent pump, pulling dsDNA into and through the RuvAB complex. RuvB forms 2 homohexamers on either side of HJ DNA bound by 1 or 2 RuvA tetramers; 4 subunits per hexamer contact DNA at a time. Coordinated motions by a converter formed by DNA-disengaged RuvB subunits stimulates ATP hydrolysis and nucleotide exchange. Immobilization of the converter enables RuvB to convert the ATP-contained energy into a lever motion, pulling 2 nucleotides of DNA out of the RuvA tetramer per ATP hydrolyzed, thus driving DNA branch migration. The RuvB motors rotate together with the DNA substrate, which together with the progressing nucleotide cycle form the mechanistic basis for DNA recombination by continuous HJ branch migration. Branch migration allows RuvC to scan DNA until it finds its consensus sequence, where it cleaves and resolves cruciform DNA. The polypeptide is Holliday junction branch migration complex subunit RuvB (Shigella boydii serotype 18 (strain CDC 3083-94 / BS512)).